The following is a 311-amino-acid chain: Metal-staphylopine import system permease protein CntB (311 aa).

6 helical membrane-spanning segments follow: residues 9-29 (IALM…LTYI), 105-125 (LTII…VVSA), 139-159 (VAFF…IIYV), 173-193 (GPES…GIYF), 237-257 (IFCM…YIFA), and 274-294 (FPVI…FNTL). The region spanning 99–295 (FMNTLKLTII…VLFIVFNTLA (197 aa)) is the ABC transmembrane type-1 domain.

The protein belongs to the binding-protein-dependent transport system permease family. In terms of assembly, the complex is composed of two ATP-binding proteins (CntD and CntF), two transmembrane proteins (CntB and CntC) and a solute-binding protein (CntA).

It is found in the cell membrane. Its activity is regulated as follows. Nickel/cobalt import is reduced in the presence of zinc. Part of the ABC transporter complex CntABCDF (Opp1) involved in the uptake of metal in complex with the metallophore staphylopine (StP). Involved in the import of divalent metals ions such as nickel, cobalt and zinc. Probably responsible for the translocation of the substrate across the membrane. Plays a major role in nickel/cobalt import in zinc-depleted conditions. Contributes to virulence. Required for full urease activity in vitro. This chain is Metal-staphylopine import system permease protein CntB, found in Staphylococcus aureus (strain NCTC 8325 / PS 47).